The following is a 647-amino-acid chain: Protein FAM161B (647 aa).

3 disordered regions span residues 1–39, 89–110, and 135–167; these read MTVGRPEGAPGGAEGSRQIFPPESFADTEAGEELSGDGL, SDPESDENLSEDEEDLESFFQD, and LNNLPSNIPRPQTQPPSGSRPPSQHRSVSSWAS. Over residues 91–105 the composition is skewed to acidic residues; the sequence is PESDENLSEDEEDLE. Positions 262–292 form a coiled coil; sequence LEKEEQLKEAARQRDLAATAEAKISKQKATR. The segment covering 332 to 350 has biased composition (polar residues); that stretch reads PIASSSNRANPQPRTATRT. Disordered regions lie at residues 332 to 352 and 388 to 439; these read PIASSSNRANPQPRTATRTQQ and KRRE…RSRS. The stretch at 510 to 546 forms a coiled coil; it reads LEEVFKAKLKENRNNDRKRAKEYKKELEEMKQRIQTR. The segment at 583 to 647 is disordered; sequence KGQGTRAVQE…QSPENLVSLA (65 aa). Over residues 590 to 602 the composition is skewed to basic and acidic residues; sequence VQEKETKIKDFPR. A compositionally biased stretch (polar residues) spans 637–647; it reads HQSPENLVSLA.

It belongs to the FAM161 family. As to quaternary structure, interacts with FAM161A. As to expression, ubiquitously expressed.

This Homo sapiens (Human) protein is Protein FAM161B (FAM161B).